Here is a 267-residue protein sequence, read N- to C-terminus: 4-hydroxy-tetrahydrodipicolinate reductase (267 aa).

10-15 lines the NAD(+) pocket; it reads GANGRM. R37 provides a ligand contact to NADP(+). Residues 98-100 and 122-125 each bind NAD(+); these read GTT and ARNY. Residue H155 is the Proton donor/acceptor of the active site. H156 contacts (S)-2,3,4,5-tetrahydrodipicolinate. The active-site Proton donor is K159. 165-166 contacts (S)-2,3,4,5-tetrahydrodipicolinate; sequence GT.

Belongs to the DapB family.

The protein resides in the cytoplasm. It catalyses the reaction (S)-2,3,4,5-tetrahydrodipicolinate + NAD(+) + H2O = (2S,4S)-4-hydroxy-2,3,4,5-tetrahydrodipicolinate + NADH + H(+). It carries out the reaction (S)-2,3,4,5-tetrahydrodipicolinate + NADP(+) + H2O = (2S,4S)-4-hydroxy-2,3,4,5-tetrahydrodipicolinate + NADPH + H(+). It participates in amino-acid biosynthesis; L-lysine biosynthesis via DAP pathway; (S)-tetrahydrodipicolinate from L-aspartate: step 4/4. Catalyzes the conversion of 4-hydroxy-tetrahydrodipicolinate (HTPA) to tetrahydrodipicolinate. The sequence is that of 4-hydroxy-tetrahydrodipicolinate reductase from Pseudoalteromonas translucida (strain TAC 125).